Consider the following 260-residue polypeptide: Adenosylcobinamide-GDP ribazoletransferase (260 aa).

The next 7 membrane-spanning stretches (helical) occupy residues 42–62 (PLAG…ANAI), 64–84 (LPPL…TGAL), 117–137 (FAAL…MAII), 144–164 (YALL…LAFW), 192–212 (GLGL…VALI), 214–234 (ALVL…AKIG), and 240–260 (TLGA…VMAL).

The protein belongs to the CobS family. It depends on Mg(2+) as a cofactor.

It localises to the cell inner membrane. The enzyme catalyses alpha-ribazole + adenosylcob(III)inamide-GDP = adenosylcob(III)alamin + GMP + H(+). It carries out the reaction alpha-ribazole 5'-phosphate + adenosylcob(III)inamide-GDP = adenosylcob(III)alamin 5'-phosphate + GMP + H(+). Its pathway is cofactor biosynthesis; adenosylcobalamin biosynthesis; adenosylcobalamin from cob(II)yrinate a,c-diamide: step 7/7. Joins adenosylcobinamide-GDP and alpha-ribazole to generate adenosylcobalamin (Ado-cobalamin). Also synthesizes adenosylcobalamin 5'-phosphate from adenosylcobinamide-GDP and alpha-ribazole 5'-phosphate. The polypeptide is Adenosylcobinamide-GDP ribazoletransferase (Brucella melitensis biotype 1 (strain ATCC 23456 / CCUG 17765 / NCTC 10094 / 16M)).